Consider the following 378-residue polypeptide: Glycerate kinase (378 aa).

The protein belongs to the glycerate kinase type-1 family.

It catalyses the reaction (R)-glycerate + ATP = (2R)-3-phosphoglycerate + ADP + H(+). This chain is Glycerate kinase (glxK), found in Haemophilus influenzae (strain ATCC 51907 / DSM 11121 / KW20 / Rd).